A 995-amino-acid polypeptide reads, in one-letter code: Beta-agarase A (995 aa).

The signal sequence occupies residues 1–20 (MKIKFLSAAIAASLALPLSA). A disordered region spans residues 936 to 972 (GTNIGVSHSGPEAPDPGEPVDPPIDPPTPPTGGVTGG). Over residues 948–965 (APDPGEPVDPPIDPPTPP) the composition is skewed to pro residues.

The protein belongs to the glycosyl hydrolase 50 family.

The catalysed reaction is Hydrolysis of (1-&gt;4)-beta-D-galactosidic linkages in agarose, giving the tetramer as the predominant product.. Its function is as follows. Hydrolyzes agarose and also neoagarotetraose to yield neoagarobiose. The protein is Beta-agarase A (agaA) of Vibrio sp. (strain JT0107).